Here is a 184-residue protein sequence, read N- to C-terminus: NADH-quinone oxidoreductase subunit B (184 aa).

The [4Fe-4S] cluster site is built by C37, C38, C103, and C132.

It belongs to the complex I 20 kDa subunit family. NDH-1 is composed of 14 different subunits. Subunits NuoB, C, D, E, F, and G constitute the peripheral sector of the complex. [4Fe-4S] cluster is required as a cofactor.

It localises to the cell membrane. The catalysed reaction is a quinone + NADH + 5 H(+)(in) = a quinol + NAD(+) + 4 H(+)(out). In terms of biological role, NDH-1 shuttles electrons from NADH, via FMN and iron-sulfur (Fe-S) centers, to quinones in the respiratory chain. The immediate electron acceptor for the enzyme in this species is believed to be a menaquinone. Couples the redox reaction to proton translocation (for every two electrons transferred, four hydrogen ions are translocated across the cytoplasmic membrane), and thus conserves the redox energy in a proton gradient. The sequence is that of NADH-quinone oxidoreductase subunit B from Nocardia farcinica (strain IFM 10152).